A 428-amino-acid chain; its full sequence is Histone-lysine N-methyltransferase SMYD3 (428 aa).

Met1 is subject to N-acetylmethionine. Residues 4 to 240 (LKVEKFTTAN…AGEELTICYL (237 aa)) enclose the SET domain. 14–16 (RGN) contributes to the S-adenosyl-L-methionine binding site. Cys49, Cys52, Cys62, Cys65, Cys71, Cys75, His83, and Cys87 together coordinate Zn(2+). The MYND-type zinc finger occupies 49-87 (CDRCLLGKEKLMRCSQCRIAKYCSAKCQKKAWPDHRREC). Residues Tyr124, Asn132, 205 to 206 (NH), Tyr239, and Phe259 contribute to the S-adenosyl-L-methionine site. The segment at 272 to 428 (DADMLTGDEQ…EECDANIRAS (157 aa)) is C-terminal domain; essential for histone methyltransferase activity, nuclear localization and mediates interaction with HSP90AA1.

This sequence belongs to the class V-like SAM-binding methyltransferase superfamily. Histone-lysine methyltransferase family. Interacts with HSPCA. Interacts with HELZ. Interacts with POLR2A; the interaction may be indirect and may be mediated by HELZ. Interacts with HSP90AA1; this interaction enhances SMYD3 histone-lysine N-methyltransferase.

It is found in the cytoplasm. Its subcellular location is the nucleus. The catalysed reaction is L-lysyl(4)-[histone H3] + 3 S-adenosyl-L-methionine = N(6),N(6),N(6)-trimethyl-L-lysyl(4)-[histone H3] + 3 S-adenosyl-L-homocysteine + 3 H(+). With respect to regulation, histone methyltransferase activity strongly stimulated by HSPCA. Its function is as follows. Histone methyltransferase. Specifically methylates 'Lys-4' of histone H3, inducing di- and tri-methylation, but not monomethylation. Also methylates 'Lys-5' of histone H4. Plays an important role in transcriptional activation as a member of an RNA polymerase complex. Binds DNA containing 5'-CCCTCC-3' or 5'-GAGGGG-3' sequences. The sequence is that of Histone-lysine N-methyltransferase SMYD3 (Smyd3) from Mus musculus (Mouse).